Consider the following 460-residue polypeptide: 3'3'-cGAMP-specific phosphodiesterase 3 (460 aa).

Positions 28-189 (PPEHCIRCCW…IPLFSRIALL (162 aa)) constitute an HD domain. The HD-GYP domain occupies 260–455 (DDAYLECIVT…LPDEYTQLPH (196 aa)). A divalent metal cation contacts are provided by His317 and Asp318. Lys321 serves as the catalytic Proton donor. Residues His346, His370, His371, and Asp399 each coordinate a divalent metal cation.

Monomer. Mn(2+) is required as a cofactor.

The catalysed reaction is 3',3'-cGAMP + H2O = 5'-pApG-3' + H(+). Its function is as follows. Phosphodiesterase (PDE) that catalyzes the hydrolysis of 3'3'-cyclic GMP-AMP (3'3'-cGAMP), leading to linear 5'-pApG. Counteracts the function of the 3'3'-cGAMP synthase DncV, and is involved in the modulation of intracellular 3'3'-cGAMP levels. Enhances bacterial chemotaxis and inhibits intestinal colonization in vivo. Thus exerts a crucial role in regulating bacterial infectivity through catalyzing 3'3'-cGAMP degradation. Is specific for 3'3'-cGAMP since it cannot degrade other cGAMP linkage isomers (3'2'-, 2'3'-, and 2'2'-cGAMPs); is also able to hydrolyze c-di-GMP but not c-di-AMP. The sequence is that of 3'3'-cGAMP-specific phosphodiesterase 3 from Vibrio cholerae serotype O1 (strain ATCC 39315 / El Tor Inaba N16961).